A 214-amino-acid chain; its full sequence is Charged multivesicular body protein 2b (214 aa).

Residues 25–55 (QRQIARDRTALEKQEKQLEMEIKKMAKTGNR) are a coiled coil. Positions 178–199 (MAHAPSAARKTPSAATAKADGI) are disordered. Positions 202–212 (EDIERQLKALG) match the MIT-interacting motif motif.

The protein belongs to the SNF7 family. Probable core component of the endosomal sorting required for transport complex III (ESCRT-III). ESCRT-III components are thought to multimerize to form a flat lattice on the perimeter membrane of the endosome.

It localises to the cytoplasm. The protein localises to the cytosol. It is found in the late endosome membrane. In terms of biological role, probable core component of the endosomal sorting required for transport complex III (ESCRT-III) which is involved in multivesicular bodies (MVBs) formation and sorting of endosomal cargo proteins into MVBs. MVBs contain intraluminal vesicles (ILVs) that are generated by invagination and scission from the limiting membrane of the endosome and mostly are delivered to lysosomes enabling degradation of membrane proteins, such as stimulated growth factor receptors, lysosomal enzymes and lipids. This Danio rerio (Zebrafish) protein is Charged multivesicular body protein 2b (chmp2b).